The chain runs to 520 residues: Cytochrome P450 monooxygenase vrtE (520 aa).

The chain crosses the membrane as a helical span at residues 16–36 (ALSLLHYVLGAIFLLLLFHML). The N-linked (GlcNAc...) asparagine glycan is linked to asparagine 137. Cysteine 459 contacts heme.

The protein belongs to the cytochrome P450 family. It depends on heme as a cofactor.

Its subcellular location is the membrane. It participates in secondary metabolite biosynthesis; terpenoid biosynthesis. Its function is as follows. Cytochrome P450 monooxygenase; part of the gene cluster that mediates the biosynthesis of viridicatumtoxin, a tetracycline-like fungal meroterpenoid with a unique, fused spirobicyclic ring system. The first step of the pathway is the production of the malonamoyl-CoA starter unit for the polyketide synthase vrtA. The aldolase vrtJ may be involved in the synthesis of the malonamate substrate for malonamoyl-CoA synthetase vrtB. The polyketide synthase vrtA then may utilize the malonamoyl-CoA starter unit, followed by sequential condensation of eight malonyl-CoA units to form the polyketide backbone. The cyclization of the last ring could be mediated by the lactamase-like protein vrtG. The proposed post-PKS tailoring steps are a hydroxylation at C5 catalyzed the cytochrome P450 monooxygenase vrtE, a hydroxylation at C12a catalyzed by VrtH and/or VrtI, and an O-methylation by the O-methyltransferase vrtF. VrtC is then proposed to catalyze the transfer of a geranyl group synthesized by vrtD to the aromatic C ring of the tetracyclic polyketide intermediate of viridicatumtoxin to yield previridicatumtoxin. Finally, the cytochrome P450 monooxygenase vrtK catalyzes the spirocyclization of the geranyl moiety of previridicatumtoxin to afford viridicatumtoxin. The sequence is that of Cytochrome P450 monooxygenase vrtE from Penicillium aethiopicum.